We begin with the raw amino-acid sequence, 271 residues long: MVENIGNGSAELVSYAKLNLYLDVLGKRSDEYHEIVGLFQTISLHDTLTVEICDGGFYLESNVALPSDNTIKRAWEMFRKNTGEEFGLKVTLKKKVPVGSGLGGGSSNAAAILRYLGEVFKIPLEDLLNIAAQVGSDVPFFLYGGTALVRGRGEIVEKLEDIEGYSVNLFFPGIHSSTKEMYLSLTPEMYRKGPGRVEELHRAYLERDYEKIRKLSYNVFEKVFLEKHPEVMYGLRNFGDGSIVKMMTGSGSAFFALYPLDEGNYPFVGGV.

Lysine 17 is a catalytic residue. 97 to 107 is a binding site for ATP; the sequence is PVGSGLGGGSS. Aspartate 137 is an active-site residue.

The protein belongs to the GHMP kinase family. IspE subfamily.

The catalysed reaction is 4-CDP-2-C-methyl-D-erythritol + ATP = 4-CDP-2-C-methyl-D-erythritol 2-phosphate + ADP + H(+). It participates in isoprenoid biosynthesis; isopentenyl diphosphate biosynthesis via DXP pathway; isopentenyl diphosphate from 1-deoxy-D-xylulose 5-phosphate: step 3/6. Its function is as follows. Catalyzes the phosphorylation of the position 2 hydroxy group of 4-diphosphocytidyl-2C-methyl-D-erythritol. This chain is 4-diphosphocytidyl-2-C-methyl-D-erythritol kinase, found in Thermotoga petrophila (strain ATCC BAA-488 / DSM 13995 / JCM 10881 / RKU-1).